The sequence spans 610 residues: Cytosolic 5'-nucleotidase 1B (610 aa).

2 disordered regions span residues 1-34 (MSQTSLKQKKNEPGMRSSKESLEAEKRKESDKTG) and 101-277 (GSQE…DEDD). Over residues 9-34 (KKNEPGMRSSKESLEAEKRKESDKTG) the composition is skewed to basic and acidic residues. The segment covering 119–132 (SQWSRISRSPSTKA) has biased composition (polar residues). Low complexity predominate over residues 148–166 (PSSSTSSRTPSTSPSLHDS). Over residues 167 to 183 (SPPPLSGQPSLQPPASP) the composition is skewed to pro residues. The span at 236–265 (SRTSPTEWKSSSQRRGIYPASTQLDRNSLS) shows a compositional bias: polar residues. The active-site Nucleophile is the aspartate 467.

It belongs to the 5'-nucleotidase type 3 family. It depends on Mg(2+) as a cofactor. Highly expressed in testis, placenta and pancreas. Detected at lower levels in heart, kidney, liver and lung.

Its subcellular location is the cytoplasm. It catalyses the reaction a ribonucleoside 5'-phosphate + H2O = a ribonucleoside + phosphate. The catalysed reaction is AMP + H2O = adenosine + phosphate. Its activity is regulated as follows. Activated by ADP. In terms of biological role, catalyzes the hydrolysis of nucleotide monophosphates, releasing inorganic phosphate and the corresponding nucleoside, AMP is the major substrate. This chain is Cytosolic 5'-nucleotidase 1B (NT5C1B), found in Homo sapiens (Human).